The chain runs to 200 residues: Probable molybdenum cofactor guanylyltransferase (200 aa).

GTP-binding positions include 9–11 (LAG), Lys21, Asp69, and Asp100. Asp100 is a binding site for Mg(2+).

It belongs to the MobA family. The cofactor is Mg(2+).

The protein resides in the cytoplasm. It carries out the reaction Mo-molybdopterin + GTP + H(+) = Mo-molybdopterin guanine dinucleotide + diphosphate. Its function is as follows. Transfers a GMP moiety from GTP to Mo-molybdopterin (Mo-MPT) cofactor (Moco or molybdenum cofactor) to form Mo-molybdopterin guanine dinucleotide (Mo-MGD) cofactor. The chain is Probable molybdenum cofactor guanylyltransferase from Bacillus cereus (strain G9842).